The sequence spans 71 residues: Sec-independent protein translocase protein TatA (71 aa).

Residues 1-21 form a helical membrane-spanning segment; that stretch reads MGSFSLLHWLVVLVIVLLVFG. Positions 43-71 are disordered; it reads LREDDKPTDQLGSTSQSTASGPQQDHGKH. The span at 52–65 shows a compositional bias: polar residues; that stretch reads QLGSTSQSTASGPQ.

Belongs to the TatA/E family. As to quaternary structure, the Tat system comprises two distinct complexes: a TatABC complex, containing multiple copies of TatA, TatB and TatC subunits, and a separate TatA complex, containing only TatA subunits. Substrates initially bind to the TatABC complex, which probably triggers association of the separate TatA complex to form the active translocon.

It localises to the cell inner membrane. Its function is as follows. Part of the twin-arginine translocation (Tat) system that transports large folded proteins containing a characteristic twin-arginine motif in their signal peptide across membranes. TatA could form the protein-conducting channel of the Tat system. This chain is Sec-independent protein translocase protein TatA, found in Xylella fastidiosa (strain 9a5c).